We begin with the raw amino-acid sequence, 2582 residues long: Chromodomain-helicase-DNA-binding protein 8 (2582 aa).

4 disordered regions span residues 22 to 111 (DDSF…PVLQ), 136 to 155 (MGVS…PSQS), 253 to 283 (VKGS…TQGE), and 349 to 377 (QKIQ…PLTL). Polar residues-rich tracts occupy residues 42 to 51 (SLDSLDQMNQ), 94 to 111 (DYTT…PVLQ), and 141 to 155 (TGVS…PSQS). A compositionally biased stretch (low complexity) spans 255–267 (GSAPAGNPGAAGP). Residues 355–372 (PQPPSSQPQPQPQPPPSA) show a composition bias toward pro residues. Phosphoserine is present on serine 434. Disordered stretches follow at residues 475–585 (RARG…VKRK) and 598–617 (DEEE…PILP). Over residues 495–518 (RPEEEGEKKRRKKSSGERLKEEKP) the composition is skewed to basic and acidic residues. Phosphoserine is present on residues serine 555 and serine 564. Basic residues predominate over residues 574 to 585 (QKRRSNRQVKRK). Lysine 611 is covalently cross-linked (Glycyl lysine isopeptide (Lys-Gly) (interchain with G-Cter in SUMO)). Chromo domains lie at 644 to 711 (AIVD…AQMR) and 726 to 792 (VEVD…RVNR). A Helicase ATP-binding domain is found at 825–999 (LFNWYNRQNC…FSLLHFLEPS (175 aa)). Position 838–845 (838–845 (DEMGLGKT)) interacts with ATP. Positions 950–953 (DEAH) match the DEAH box motif. Positions 1139–1290 (LIDKLLPKLK…KAVLQSMSGR (152 aa)) constitute a Helicase C-terminal domain. A phosphoserine mark is found at serine 1422 and serine 1426. Residues 1694-1715 (EDPEYKPLQGPPKDPDDEGDPL) form a disordered region. Positions 1791–2304 (IARREKQQRW…LVELEVECME (514 aa)) are interaction with FAM124B. Residues serine 1978 and serine 1980 each carry the phosphoserine modification. The tract at residues 1990-2019 (QCTSRTASPSPLRPDAPVEKSPEESTVQVP) is disordered. Threonine 1995 is subject to Phosphothreonine. Serine 1997, serine 1999, and serine 2010 each carry phosphoserine. Lysine 2027 is covalently cross-linked (Glycyl lysine isopeptide (Lys-Gly) (interchain with G-Cter in SUMO2)). Phosphoserine is present on residues serine 2040, serine 2070, and serine 2072. The tract at residues 2045 to 2120 (VRVGSSDTAP…RSRPKLYDEE (76 aa)) is disordered. Positions 2065–2074 (EDEDDSDSEL) are enriched in acidic residues. Low complexity predominate over residues 2077–2096 (SKLSPSSSSSSSSSSSSSST). Residues 2104-2118 (EEKLTADRSRPKLYD) are compositionally biased toward basic and acidic residues. A phosphoserine mark is found at serine 2184, serine 2202, and serine 2204. The segment at 2187-2233 (VTAGGILGPGNHLLDSPSLTPGEDGDSPVPTPRSGSAASMAEEEASA) is disordered. Threonine 2206 carries the phosphothreonine modification. At serine 2213 the chain carries Phosphoserine. Phosphothreonine is present on threonine 2217. Positions 2222 to 2233 (SAASMAEEEASA) are enriched in low complexity. Phosphoserine is present on serine 2225. A Glycyl lysine isopeptide (Lys-Gly) (interchain with G-Cter in SUMO2) cross-link involves residue lysine 2258. Residues 2486–2582 (HVDSSTMLHH…NSDSSEDADD (97 aa)) form a disordered region. The segment covering 2493–2511 (LHHHHHHPHPHHHHHHHPG) has biased composition (basic residues). Positions 2514–2529 (TTGYPSSPATTTSGTA) are enriched in low complexity. The residue at position 2520 (serine 2520) is a Phosphoserine. Residues 2537–2551 (PEDDDEEEDEEDDDL) are compositionally biased toward acidic residues.

Belongs to the SNF2/RAD54 helicase family. CHD8 subfamily. In terms of assembly, interacts with CTNNB1 and PIAS3. Component of some MLL1/MLL complex, at least composed of the core components KMT2A/MLL1, ASH2L, HCFC1/HCF1, WDR5 and RBBP5, as well as the facultative components BACC1, CHD8, E2F6, HSP70, INO80C, KANSL1, LAS1L, MAX, MCRS1, MGA, KAT8/MOF, PELP1, PHF20, PRP31, RING2, RUVB1/TIP49A, RUVB2/TIP49B, SENP3, TAF1, TAF4, TAF6, TAF7, TAF9 and TEX10. Interacts with CHD7. Interacts with FAM124B. Interacts with p53/TP53 and histone H1. Interacts with CTCF. Interacts with TLK2. Interacts with HNRNPL in an RNA-dependent manner. In terms of processing, sumoylated.

Its subcellular location is the nucleus. It carries out the reaction ATP + H2O = ADP + phosphate + H(+). In terms of biological role, ATP-dependent chromatin-remodeling factor, it slides nucleosomes along DNA; nucleosome sliding requires ATP. Acts as a transcription repressor by remodeling chromatin structure and recruiting histone H1 to target genes. Suppresses p53/TP53-mediated apoptosis by recruiting histone H1 and preventing p53/TP53 transactivation activity. Acts as a negative regulator of Wnt signaling pathway by regulating beta-catenin (CTNNB1) activity. Negatively regulates CTNNB1-targeted gene expression by being recruited specifically to the promoter regions of several CTNNB1 responsive genes. Involved in both enhancer blocking and epigenetic remodeling at chromatin boundary via its interaction with CTCF. Acts as a suppressor of STAT3 activity by suppressing the LIF-induced STAT3 transcriptional activity. Also acts as a transcription activator via its interaction with ZNF143 by participating in efficient U6 RNA polymerase III transcription. Regulates alternative splicing of a core group of genes involved in neuronal differentiation, cell cycle and DNA repair. Enables H3K36me3-coupled transcription elongation and co-transcriptional RNA processing likely via interaction with HNRNPL. In Mus musculus (Mouse), this protein is Chromodomain-helicase-DNA-binding protein 8.